A 662-amino-acid polypeptide reads, in one-letter code: MKTFINWLKKPSISKKLIVSFIAILIIPILILEFSSYRSASGKLDQEIMGNAKNSVDTFNTTVTNDLGEKAKAVTFFSESLKRSAFKGKSNQEEIKAKFSQYVSINQGVARIYGGADNGTYVQAPKEKLPEGYDPRQRPWYQDAMKAGGEIVVTDPYVAASDGSMVITIAQELKDGSGVVAMDITIDKLLEQMKQIKVGKEGYAFIATKNKTYVAHKNHKAGEKLSGDWVAKMYANDSGELQYTLNNEDKKMTYTTNELTGWKIAGTMYMDEIKDASKSVLTTGMIVLIASIVAGGILILFIVRSITKPLKRLVQSSKTISRGDLTETIEIHSKDELGELGESFNEMGQSLRSLISAIQDSVNNVAASSEQLTASAGQTSKATEHITMAIEQFSNGNEEQSEKVESSSHQLNLMNEGLQQVSQTSSDITKASIQSTEIAGTGEKFVQQTVGQMNSINQSVQQAEAVVKGLEGKSKDITSILRVINGIADQTNLLALNAAIEAARAGESGRGFSVVAEEVRKLAVQSADSAKEIEKLIQEIVAEIDTSLHMFKEVNQEVQSGLVVTDNTKESFQSIFSMTNEIAGKLQTMNSTVEQLSDRSQHVSAAVSGIADVSKESSASIQDIAASAEEQLASMEEISSSATTLAQMAEELRDLTKQFKIE.

Residues 1-16 (MKTFINWLKKPSISKK) lie on the Cytoplasmic side of the membrane. The helical transmembrane segment at 17–37 (LIVSFIAILIIPILILEFSSY) threads the bilayer. Residues 38 to 282 (RSASGKLDQE…IKDASKSVLT (245 aa)) are Extracellular-facing. One can recognise a Cache domain in the interval 153 to 229 (VTDPYVAASD…KAGEKLSGDW (77 aa)). The helical transmembrane segment at 283-303 (TGMIVLIASIVAGGILILFIV) threads the bilayer. An HAMP domain is found at 304-356 (RSITKPLKRLVQSSKTISRGDLTETIEIHSKDELGELGESFNEMGQSLRSLIS). Over 304-662 (RSITKPLKRL…RDLTKQFKIE (359 aa)) the chain is Cytoplasmic. Glutamate methyl ester (Gln) occurs at positions 371 and 595. In terms of domain architecture, Methyl-accepting transducer spans 375-611 (SAGQTSKATE…HVSAAVSGIA (237 aa)). Glutamate 630 and glutamate 637 each carry glutamate methyl ester (Glu).

Belongs to the methyl-accepting chemotaxis (MCP) protein family. As to quaternary structure, interacts with FloT. Post-translationally, some glutamine residues are deamidated to glutamate by CheD and subsequently methylated. In terms of processing, the demethylation is selective. Gln-371 is demethylated only upon asparagine addition whereas Glu-637 is demethylated only upon asparagine removal. Glu-630 appears indiscriminate and is demethylated upon both addition and removal of asparagine.

Its subcellular location is the cell membrane. The protein localises to the membrane raft. In terms of biological role, chemotactic-signal transducers respond to changes in the concentration of attractants and repellents in the environment, transduce a signal from the outside to the inside of the cell, and facilitate sensory adaptation through the variation of the level of methylation. All amino acids serve as attractants in B.subtilis, they appear to cause an increase in the turnover methyl groups, leading to methylation of an unidentified acceptor, while repellents have been shown to cause a decrease in methyl group turnover. The methyl groups are added by a methyltransferase and removed by a methylesterase. McpB is required for taxis towards asparagine, aspartate, glutamine, and histidine. This Bacillus subtilis (strain 168) protein is Methyl-accepting chemotaxis protein McpB (mcpB).